The chain runs to 110 residues: Endoribonuclease SymE (110 aa).

In terms of domain architecture, SpoVT-AbrB spans 29-74; it reads SRYPDYTRIPALTMKGQWLEAAGFATGTEVDVRVMNGCIVLTAQQP.

This sequence belongs to the SymE family.

Its subcellular location is the cytoplasm. Involved in the degradation and recycling of damaged RNA. It is itself a target for degradation by the ATP-dependent protease Lon. The protein is Endoribonuclease SymE of Salmonella typhi.